The chain runs to 861 residues: DNA mismatch repair protein MutS (861 aa).

ATP is bound at residue 616–623; the sequence is GPNMGGKS.

The protein belongs to the DNA mismatch repair MutS family.

In terms of biological role, this protein is involved in the repair of mismatches in DNA. It is possible that it carries out the mismatch recognition step. This protein has a weak ATPase activity. The polypeptide is DNA mismatch repair protein MutS (Haemophilus influenzae (strain PittEE)).